The chain runs to 103 residues: MIITTTDFIEGKKIRDYKGVVSKEAVIGVNIIRDVFAKVRDIVGGRSAAYEKELTNARNQILEELKEEARNLGANAVIGINFSYEMYQSMLLVSVWGTAVVVE.

This sequence belongs to the UPF0145 family.

The polypeptide is UPF0145 protein PERMA_0324 (Persephonella marina (strain DSM 14350 / EX-H1)).